Reading from the N-terminus, the 554-residue chain is Propanediol dehydratase large subunit (554 aa).

It belongs to the diol/glycerol dehydratase large subunit family. The propanediol dehydratase enzyme is a heterotrimeric complex composed of a large (PduC), a medium (PduD) and a small (PduE) subunit. Adenosylcob(III)alamin serves as cofactor.

Its subcellular location is the bacterial microcompartment. The enzyme catalyses propane-1,2-diol = propanal + H2O. Its pathway is polyol metabolism; 1,2-propanediol degradation. With respect to regulation, inhibited by glycerol. Functionally, part of the PduCDE complex that catalyzes the dehydration of 1,2-propanediol (1,2-PD) to propionaldehyde. Required for S.typhimurium growth on 1,2-PD as the sole carbon and energy source. This subunit is directly targeted to the BMC. The 1,2-PD-specific bacterial microcompartment (BMC) concentrates low levels of 1,2-PD catabolic enzymes, concentrates volatile reaction intermediates thus enhancing pathway flux and keeps the level of toxic, mutagenic propionaldehyde low. This is Propanediol dehydratase large subunit from Salmonella typhimurium (strain LT2 / SGSC1412 / ATCC 700720).